The chain runs to 238 residues: CD209 antigen-like protein A (238 aa).

Residues 1–51 lie on the Cytoplasmic side of the membrane; the sequence is MSDSKEMGKRQLRPLDEELLTSSHTRHSIKGFGFQTNSGFSSFTGCLVHSQ. The chain crosses the membrane as a helical; Signal-anchor for type II membrane protein span at residues 52 to 72; the sequence is VPLALQVLFLAVCSVLLVVIL. Residues 73–238 are Extracellular-facing; the sequence is VKVYKIPSSQ…KKLSTSCPSK (166 aa). An intrachain disulfide couples C108 to C119. Residues 115-229 form the C-type lectin domain; the sequence is FQGSCYFFSV…CTNKKFWICK (115 aa). N130 carries N-linked (GlcNAc...) asparagine glycosylation. 2 cysteine pairs are disulfide-bonded: C136–C228 and C207–C220. The Ca(2+) site is built by E198, N200, L202, E205, N216, and D217. Residue N216 is glycosylated (N-linked (GlcNAc...) asparagine).

Predominantly expressed in dendritic cells. Detected at very low levels in lung, spleen, lymph nodes and bone marrow.

The protein localises to the membrane. Functionally, probable pathogen-recognition receptor. May mediate the endocytosis of pathogens which are subsequently degraded in lysosomal compartments. May recognize in a calcium-dependent manner high mannose N-linked oligosaccharides in a variety of pathogen antigens. In Mus musculus (Mouse), this protein is CD209 antigen-like protein A (Cd209a).